Here is a 125-residue protein sequence, read N- to C-terminus: Small ribosomal subunit protein bS6 (125 aa).

The interval 99 to 125 (ASPMVKAKDERRASAEVENNDFEDAEE) is disordered. Basic and acidic residues predominate over residues 104-113 (KAKDERRASA). Positions 116 to 125 (ENNDFEDAEE) are enriched in acidic residues.

This sequence belongs to the bacterial ribosomal protein bS6 family.

Binds together with bS18 to 16S ribosomal RNA. This Mannheimia succiniciproducens (strain KCTC 0769BP / MBEL55E) protein is Small ribosomal subunit protein bS6.